The sequence spans 194 residues: dTTP/UTP pyrophosphatase (194 aa).

Aspartate 69 (proton acceptor) is an active-site residue.

It belongs to the Maf family. YhdE subfamily. Requires a divalent metal cation as cofactor.

The protein resides in the cytoplasm. The enzyme catalyses dTTP + H2O = dTMP + diphosphate + H(+). The catalysed reaction is UTP + H2O = UMP + diphosphate + H(+). In terms of biological role, nucleoside triphosphate pyrophosphatase that hydrolyzes dTTP and UTP. May have a dual role in cell division arrest and in preventing the incorporation of modified nucleotides into cellular nucleic acids. In Moorella thermoacetica (strain ATCC 39073 / JCM 9320), this protein is dTTP/UTP pyrophosphatase.